The primary structure comprises 152 residues: Phospholipase A2 GL16-1 (152 aa).

The first 21 residues, 1-21 (MNPAHLLVLLAVCVSLLGAST), serve as a signal peptide directing secretion. Positions 22–27 (IPPLPL) are excised as a propeptide. Cystine bridges form between C38/C104, C54/C151, C56/C72, C71/C132, C78/C125, C88/C118, and C111/C123. Residues Y55, G57, and G59 each contribute to the Ca(2+) site. Residue H75 is part of the active site. Ca(2+) is bound at residue D76. D126 is a catalytic residue.

It belongs to the phospholipase A2 family. Group I subfamily. Ca(2+) serves as cofactor.

Its subcellular location is the secreted. The enzyme catalyses a 1,2-diacyl-sn-glycero-3-phosphocholine + H2O = a 1-acyl-sn-glycero-3-phosphocholine + a fatty acid + H(+). PA2 catalyzes the calcium-dependent hydrolysis of the 2-acyl groups in 3-sn-phosphoglycerides. This chain is Phospholipase A2 GL16-1, found in Laticauda semifasciata (Black-banded sea krait).